A 546-amino-acid polypeptide reads, in one-letter code: Interleukin-20 receptor subunit alpha (546 aa).

A signal peptide spans 1 to 32; it reads MHTPGTPAPGHPDPPPLLLLTLLLLLAASGRA. The Extracellular portion of the chain corresponds to 33 to 253; that stretch reads VPCVFCGLPK…EVQTSAWKAK (221 aa). 2 consecutive Fibronectin type-III domains span residues 42–138 and 139–245; these read KPTN…FLET and QVSP…TLEV. N-linked (GlcNAc...) asparagine glycosylation is found at asparagine 45, asparagine 86, asparagine 94, asparagine 185, and asparagine 203. An intrachain disulfide couples cysteine 90 to cysteine 98. Cysteine 218 and cysteine 239 are disulfide-bonded. The chain crosses the membrane as a helical span at residues 254 to 274; sequence VIFWYVFLTSVIVFLFSAIGY. Residues 275–546 lie on the Cytoplasmic side of the membrane; it reads LVYRYIHVGK…EWGLHVQMES (272 aa).

Belongs to the type II cytokine receptor family. As to quaternary structure, heterodimer with IL20RB and heterodimer with IL10RB.

The protein resides in the membrane. In terms of biological role, the IL20RA/IL20RB dimer is a receptor for IL19, IL20 and IL24. The IL20RA/IL10RB dimer is a receptor for IL26. This Mus musculus (Mouse) protein is Interleukin-20 receptor subunit alpha (Il20ra).